We begin with the raw amino-acid sequence, 419 residues long: Effector protein BipC (419 aa).

Disordered regions lie at residues 62 to 91 (VAGS…TVSG) and 338 to 402 (LQSG…AKSQ). 2 stretches are compositionally biased toward basic and acidic residues: residues 71 to 91 (ELAR…TVSG) and 380 to 392 (TRDE…REAA).

It belongs to the SctB/SipC family.

It is found in the secreted. The sequence is that of Effector protein BipC (bipC) from Burkholderia pseudomallei (strain 1106a).